A 364-amino-acid polypeptide reads, in one-letter code: F-box/kelch-repeat protein At3g23880 (364 aa).

Residues 8–54 (MFSPHNLPLEMMEEILLRLPVKSLTRFKCVCSSWRSLISETLFALKH) form the F-box domain. 2 Kelch repeats span residues 169–215 (DYKV…SRSG) and 216–265 (IYIN…TLGD).

In Arabidopsis thaliana (Mouse-ear cress), this protein is F-box/kelch-repeat protein At3g23880.